The primary structure comprises 673 residues: UvrABC system protein B (673 aa).

Positions 26–183 (ANFEAGLAKQ…RHLTDLQYTR (158 aa)) constitute a Helicase ATP-binding domain. 39-46 (GVTGSGKT) is a binding site for ATP. A Beta-hairpin motif is present at residues 92 to 115 (YYDYYQPEAYVPSSDTFIEKDSSI). One can recognise a Helicase C-terminal domain in the interval 431 to 597 (QVDDLMSEIH…SVERPISDIM (167 aa)). Residues 601-631 (REDAAEKKSGKGRSKSRQVAEETPDYRAMKP) form a disordered region. Basic and acidic residues predominate over residues 618 to 630 (QVAEETPDYRAMK). One can recognise a UVR domain in the interval 635 to 670 (AGKLKSLEQKMYQHAKDLEFEAAAQIRDQIQKLKTA).

The protein belongs to the UvrB family. In terms of assembly, forms a heterotetramer with UvrA during the search for lesions. Interacts with UvrC in an incision complex.

It localises to the cytoplasm. Functionally, the UvrABC repair system catalyzes the recognition and processing of DNA lesions. A damage recognition complex composed of 2 UvrA and 2 UvrB subunits scans DNA for abnormalities. Upon binding of the UvrA(2)B(2) complex to a putative damaged site, the DNA wraps around one UvrB monomer. DNA wrap is dependent on ATP binding by UvrB and probably causes local melting of the DNA helix, facilitating insertion of UvrB beta-hairpin between the DNA strands. Then UvrB probes one DNA strand for the presence of a lesion. If a lesion is found the UvrA subunits dissociate and the UvrB-DNA preincision complex is formed. This complex is subsequently bound by UvrC and the second UvrB is released. If no lesion is found, the DNA wraps around the other UvrB subunit that will check the other stand for damage. In Xanthomonas oryzae pv. oryzae (strain MAFF 311018), this protein is UvrABC system protein B.